Here is a 335-residue protein sequence, read N- to C-terminus: DNA-directed RNA polymerase subunit alpha (335 aa).

Residues 1 to 233 form an alpha N-terminal domain (alpha-NTD) region; that stretch reads MIRDKISVSI…DLFIPFLHGE (233 aa). Residues 264-335 form an alpha C-terminal domain (alpha-CTD) region; that stretch reads KEKIAFKHIF…KRFAIDPPRN (72 aa).

The protein belongs to the RNA polymerase alpha chain family. In terms of assembly, in plastids the minimal PEP RNA polymerase catalytic core is composed of four subunits: alpha, beta, beta', and beta''. When a (nuclear-encoded) sigma factor is associated with the core the holoenzyme is formed, which can initiate transcription.

It is found in the plastid. Its subcellular location is the chloroplast. It catalyses the reaction RNA(n) + a ribonucleoside 5'-triphosphate = RNA(n+1) + diphosphate. DNA-dependent RNA polymerase catalyzes the transcription of DNA into RNA using the four ribonucleoside triphosphates as substrates. This is DNA-directed RNA polymerase subunit alpha from Pinus koraiensis (Korean pine).